The sequence spans 20 residues: Neurotoxin BmK 18(2) (20 aa).

An LCN-type CS-alpha/beta domain is found at 2-20; that stretch reads RDAYIAEDYDCVYHCARDA.

The protein belongs to the long (4 C-C) scorpion toxin superfamily. Sodium channel inhibitor family. Alpha subfamily. In terms of tissue distribution, expressed by the venom gland.

The protein resides in the secreted. Its function is as follows. Binds to sodium channels (Nav) and inhibits the inactivation of the activated channels, thereby blocking neuronal transmission. In Olivierus martensii (Manchurian scorpion), this protein is Neurotoxin BmK 18(2).